Here is a 261-residue protein sequence, read N- to C-terminus: Transmembrane and immunoglobulin domain-containing protein 1 (261 aa).

Positions 1-26 (MVWKITGPLQACQLLLVVLSLPQGRT) are cleaved as a signal peptide. The Ig-like C2-type 1 domain occupies 27–113 (SSVLTVNGRT…LQRDQTVSVT (87 aa)). The Extracellular segment spans residues 27-215 (SSVLTVNGRT…DFHLLVKDKV (189 aa)). A disulfide bridge connects residues Cys53 and Cys102. N-linked (GlcNAc...) asparagine glycans are attached at residues Asn57, Asn82, Asn92, Asn117, Asn157, and Asn189. The Ig-like C2-type 2 domain maps to 121 to 206 (PPLLSGNGFQ…SSSLKMETMD (86 aa)). Cys142 and Cys194 are disulfide-bonded. A helical transmembrane segment spans residues 216 to 236 (FVMPAEPIIAACVVVVLTMAF). Residues 237–261 (ALFSRRKRIMKLCGKKNDPNSETAL) are Cytoplasmic-facing.

As to quaternary structure, homodimer. Post-translationally, N-glycosylated.

It localises to the cell membrane. The protein localises to the cytoplasm. Functionally, may control cell-cell adhesion, cell migration and proliferation, cell morphology, and protects renal epithelial cells from oxidative cell injury to promote cell survival. The sequence is that of Transmembrane and immunoglobulin domain-containing protein 1 from Mus musculus (Mouse).